A 118-amino-acid polypeptide reads, in one-letter code: Small ribosomal subunit protein uS13 (118 aa).

Positions 94 to 118 are disordered; that stretch reads GLPVRGQRTKTNARTRKGPCKPIKK.

This sequence belongs to the universal ribosomal protein uS13 family. As to quaternary structure, part of the 30S ribosomal subunit. Forms a loose heterodimer with protein S19. Forms two bridges to the 50S subunit in the 70S ribosome.

Its function is as follows. Located at the top of the head of the 30S subunit, it contacts several helices of the 16S rRNA. In the 70S ribosome it contacts the 23S rRNA (bridge B1a) and protein L5 of the 50S subunit (bridge B1b), connecting the 2 subunits; these bridges are implicated in subunit movement. Contacts the tRNAs in the A and P-sites. This is Small ribosomal subunit protein uS13 from Salmonella typhi.